The following is a 144-amino-acid chain: Large ribosomal subunit protein uL15 (144 aa).

The segment at 1–49 (MIKLECLQDPSPRKRRTKLLGRGPSSGHGKTSSRGHKGDCSRSGYKRRF) is disordered.

Belongs to the universal ribosomal protein uL15 family. As to quaternary structure, part of the 50S ribosomal subunit.

In terms of biological role, binds to the 23S rRNA. This Chlamydia trachomatis serovar A (strain ATCC VR-571B / DSM 19440 / HAR-13) protein is Large ribosomal subunit protein uL15.